Consider the following 115-residue polypeptide: Probable prefoldin subunit 1 (115 aa).

Belongs to the prefoldin subunit beta family. As to quaternary structure, heterohexamer of two PFD-alpha type and four PFD-beta type subunits.

Functionally, binds specifically to cytosolic chaperonin (c-CPN) and transfers target proteins to it. Binds to nascent polypeptide chain and promotes folding in an environment in which there are many competing pathways for nonnative proteins. The polypeptide is Probable prefoldin subunit 1 (pfdn1) (Dictyostelium discoideum (Social amoeba)).